Reading from the N-terminus, the 519-residue chain is SMR domain-containing protein At5g58720 (519 aa).

Positions 1 to 15 are enriched in basic residues; the sequence is MKQKNQHKKKKKRSC. 2 disordered regions span residues 1–47 and 92–128; these read MKQK…REIE and ESGDDPSTSSVASGSSGQETASTSEYGAGSSSSCSED. Over residues 28–47 the composition is skewed to basic and acidic residues; the sequence is GNKKDVEEERKDGEGKREIE. Residues 98–127 show a composition bias toward low complexity; that stretch reads STSSVASGSSGQETASTSEYGAGSSSSCSE. The Smr domain maps to 428–502; it reads IDLHGQHVKP…NRGTLLIKLD (75 aa).

Interacts with PRL1.

The polypeptide is SMR domain-containing protein At5g58720 (Arabidopsis thaliana (Mouse-ear cress)).